A 293-amino-acid polypeptide reads, in one-letter code: LysM and putative peptidoglycan-binding domain-containing protein 4 (293 aa).

At 1–214 the chain is on the extracellular side; it reads MRQKEVLAKS…VADGADCGIQ (214 aa). The segment at 28 to 65 is disordered; the sequence is FNNGSGDSGDSSEEESHQVVLRPRGKEHQKNSSQRPGA. N-linked (GlcNAc...) asparagine glycosylation is present at N30. The LysM domain occupies 71–115; it reads LQRELAQEDSLNKLALQYGCKVADIKKANNFIREQDLYALKSIKI. Residues 215-235 traverse the membrane as a helical segment; sequence WWNAVFLMLLIGIVLPVFYLV. Residues 236–293 lie on the Cytoplasmic side of the membrane; it reads YFKIQATGEPSNGLNATVVPNGSMTLSPVPGQAPRLAIPVPTLPASDSQVSPTTQAGA.

It localises to the membrane. This is LysM and putative peptidoglycan-binding domain-containing protein 4 (Lysmd4) from Mus musculus (Mouse).